The chain runs to 186 residues: Guanylate kinase (186 aa).

A Guanylate kinase-like domain is found at 4–182 (GKLIVLTGPS…TLQNLDKILF (179 aa)). Residue 11–18 (GPSGVGKG) participates in ATP binding.

It belongs to the guanylate kinase family.

It localises to the cytoplasm. The enzyme catalyses GMP + ATP = GDP + ADP. In terms of biological role, essential for recycling GMP and indirectly, cGMP. In Trichodesmium erythraeum (strain IMS101), this protein is Guanylate kinase.